Consider the following 141-residue polypeptide: Hemoglobin subunit alpha-D (141 aa).

In terms of domain architecture, Globin spans 1–141; the sequence is MLTADDKKLI…VASVLAEKYR (141 aa). Residues His-58 and His-87 each coordinate heme b.

Belongs to the globin family. As to quaternary structure, heterotetramer of two alpha-D chains and two beta chains. As to expression, red blood cells.

Involved in oxygen transport from the lung to the various peripheral tissues. The polypeptide is Hemoglobin subunit alpha-D (HBAD) (Rhea americana (Greater rhea)).